A 902-amino-acid polypeptide reads, in one-letter code: MLAKLLTKIFGSRNDRTLCRMSKAVDAINQMEPAMEQLSDEQLAAKTVEFRDCIAQGATVDSLLPEAFAVVREASKRVFGMRHFDVQLMGGMVLNDRCIAEMRTGEGKTLTATLPAYLNALSGKGVHVVTVNDYLAQRDAENNRPLFEFLGLSVGINLPGLPAPAKRAAYAADITYGTNNEYGFDYLRDNMAFSPEERVQRKLHYALVDEVDSILIDEARTPLIISGPAEDSSDMYRRVDKLIPHLIRQDKEDSESFQGEGHFSVDEKSRQVNLTERGLMLIEELLVKAGIMEEGESLYSPANIMLMHHVTAALRAHVLFARDVDYIVKDGEVIIVDEHTGRTMPGRRWSDGLHQAVEAKENVAIQNENQTLASITFQNYFRLYEKLAGMTGTADTEAFEFSSIYKLDTIVVPTNRPMIRKDLADLVYMTEKEKIDAIIEDIKTCTERGQPVLVGTISIEKSELVSGELEKAGIAHKVLNAKFHAMEADIVAQAGQPGAVTIATNMAGRGTDIVLGGSWQAEVAALESPDEQQIAAIKDAWQPRHEAVLAAGGLHIIGTERHESRRIDNQLRGRSGRQGDAGSSRFYLSMEDALMRIFASDRVSGMMRKLGMKPGEAIEHPWVTKAIANAQRKVESRNFDIRKQLLEYDDVANDQRCAIYTQRNELLDVADISETVKSIREDVLKTILDSYIPPQSLEEMWDVQGLEHRLKDDFDLDMPVAQWLDDEPGLHEEILRERVLEQMLAQYQRKEEIVGSDIMRNFEKGVMLQTLDSLWKEHLAAMDYLRQGIHLRGYAQKDPKQEYKRESFAMFAAMLESLKYEVISMLSKVQVRMPEEVEAMEQQRREEAERLARQQQLSHQAPVEELTQGSAAAAQEGRKVGRNDPCPCGSGKKFKHCHGKLQ.

ATP-binding positions include Q87, 105 to 109, and D512; that span reads GEGKT. Positions 851 to 902 are disordered; the sequence is LARQQQLSHQAPVEELTQGSAAAAQEGRKVGRNDPCPCGSGKKFKHCHGKLQ. Zn(2+) is bound by residues C886, C888, C897, and H898. The span at 892 to 902 shows a compositional bias: basic residues; that stretch reads KKFKHCHGKLQ.

The protein belongs to the SecA family. Monomer and homodimer. Part of the essential Sec protein translocation apparatus which comprises SecA, SecYEG and auxiliary proteins SecDF-YajC and YidC. It depends on Zn(2+) as a cofactor.

The protein resides in the cell inner membrane. It is found in the cytoplasm. The enzyme catalyses ATP + H2O + cellular proteinSide 1 = ADP + phosphate + cellular proteinSide 2.. Functionally, part of the Sec protein translocase complex. Interacts with the SecYEG preprotein conducting channel. Has a central role in coupling the hydrolysis of ATP to the transfer of proteins into and across the cell membrane, serving both as a receptor for the preprotein-SecB complex and as an ATP-driven molecular motor driving the stepwise translocation of polypeptide chains across the membrane. The chain is Protein translocase subunit SecA from Sodalis glossinidius (strain morsitans).